Reading from the N-terminus, the 185-residue chain is MGNSKLSKEEKDEIMKKTKYTSGDIEQLTKDFKVAAASDKKAGFSQEEFIKFFRIRFNEWDEASMVRMFKLFDSDGNGVIDVKEFITALYMMTRAPTTDKLGFLFDLFDSDKSGYLEAGEIEKLVNIVVVCSSAMGYTTSEAIDFVYSITSIKISREEFVKSASQSDKFVRMICFYDNPCKQLLY.

2 EF-hand domains span residues 60 to 95 (WDEA…MTRA) and 96 to 131 (PTTD…VVVC). The Ca(2+) site is built by D73, D75, N77, E84, D109, D111, S113, Y115, and E120.

This sequence belongs to the recoverin family.

This Dictyostelium discoideum (Social amoeba) protein is Calcium-binding protein K-like.